A 479-amino-acid chain; its full sequence is ATP synthase subunit beta (479 aa).

153–160 (GGAGVGKT) contributes to the ATP binding site.

It belongs to the ATPase alpha/beta chains family. F-type ATPases have 2 components, CF(1) - the catalytic core - and CF(0) - the membrane proton channel. CF(1) has five subunits: alpha(3), beta(3), gamma(1), delta(1), epsilon(1). CF(0) has three main subunits: a(1), b(2) and c(9-12). The alpha and beta chains form an alternating ring which encloses part of the gamma chain. CF(1) is attached to CF(0) by a central stalk formed by the gamma and epsilon chains, while a peripheral stalk is formed by the delta and b chains.

The protein resides in the cell membrane. The enzyme catalyses ATP + H2O + 4 H(+)(in) = ADP + phosphate + 5 H(+)(out). Its function is as follows. Produces ATP from ADP in the presence of a proton gradient across the membrane. The catalytic sites are hosted primarily by the beta subunits. This is ATP synthase subunit beta from Lactobacillus delbrueckii subsp. bulgaricus (strain ATCC 11842 / DSM 20081 / BCRC 10696 / JCM 1002 / NBRC 13953 / NCIMB 11778 / NCTC 12712 / WDCM 00102 / Lb 14).